The primary structure comprises 309 residues: Porphobilinogen deaminase (309 aa).

Residue cysteine 240 is modified to S-(dipyrrolylmethanemethyl)cysteine.

It belongs to the HMBS family. In terms of assembly, monomer. The cofactor is dipyrromethane.

The catalysed reaction is 4 porphobilinogen + H2O = hydroxymethylbilane + 4 NH4(+). It participates in porphyrin-containing compound metabolism; protoporphyrin-IX biosynthesis; coproporphyrinogen-III from 5-aminolevulinate: step 2/4. Its function is as follows. Tetrapolymerization of the monopyrrole PBG into the hydroxymethylbilane pre-uroporphyrinogen in several discrete steps. The chain is Porphobilinogen deaminase from Brevibacillus brevis (strain 47 / JCM 6285 / NBRC 100599).